The chain runs to 529 residues: GTPase Obg (529 aa).

The region spanning 2 to 159 is the Obg domain; sequence PTFVDRVVLH…LDAVLELKTV (158 aa). The segment at 62-86 is disordered; sequence FHPHQRASRGRPGQGSNRHGADGAD. Residues 160-332 enclose the OBG-type G domain; that stretch reads ADVALVGFPS…LSLALADLVA (173 aa). Residues 166–173, 191–195, 213–216, 284–287, and 313–315 each bind GTP; these read GFPSAGKS, FTTLV, DVPG, NKID, and STA. Mg(2+)-binding residues include Ser173 and Thr193. The region spanning 350–427 is the OCT domain; it reads PRAVNEPDFT…IGEVTFDWEP (78 aa). Disordered regions lie at residues 434–494 and 506–529; these read LGNG…DRLR and ARRA…EEEG. 2 stretches are compositionally biased toward low complexity: residues 461–472 and 508–520; these read AGTAASGAAPSP and RAAA…VRGE.

This sequence belongs to the TRAFAC class OBG-HflX-like GTPase superfamily. OBG GTPase family. In terms of assembly, monomer. Mg(2+) is required as a cofactor.

It is found in the cytoplasm. Functionally, an essential GTPase which binds GTP, GDP and possibly (p)ppGpp with moderate affinity, with high nucleotide exchange rates and a fairly low GTP hydrolysis rate. Plays a role in control of the cell cycle, stress response, ribosome biogenesis and in those bacteria that undergo differentiation, in morphogenesis control. The chain is GTPase Obg from Frankia casuarinae (strain DSM 45818 / CECT 9043 / HFP020203 / CcI3).